Here is a 185-residue protein sequence, read N- to C-terminus: Pyridoxal 5'-phosphate synthase subunit PdxT (185 aa).

An L-glutamine-binding site is contributed by 46–48; it reads GES. Residue Cys-75 is the Nucleophile of the active site. L-glutamine-binding positions include Arg-101 and 129 to 130; that span reads IR. Active-site charge relay system residues include His-165 and Glu-167.

It belongs to the glutaminase PdxT/SNO family. In terms of assembly, in the presence of PdxS, forms a dodecamer of heterodimers. Only shows activity in the heterodimer.

It carries out the reaction aldehydo-D-ribose 5-phosphate + D-glyceraldehyde 3-phosphate + L-glutamine = pyridoxal 5'-phosphate + L-glutamate + phosphate + 3 H2O + H(+). The catalysed reaction is L-glutamine + H2O = L-glutamate + NH4(+). The protein operates within cofactor biosynthesis; pyridoxal 5'-phosphate biosynthesis. Catalyzes the hydrolysis of glutamine to glutamate and ammonia as part of the biosynthesis of pyridoxal 5'-phosphate. The resulting ammonia molecule is channeled to the active site of PdxS. This chain is Pyridoxal 5'-phosphate synthase subunit PdxT, found in Staphylococcus epidermidis (strain ATCC 12228 / FDA PCI 1200).